A 1353-amino-acid polypeptide reads, in one-letter code: Xanthine dehydrogenase 2 (1353 aa).

The 2Fe-2S ferredoxin-type domain occupies 7-93 (MEAIMYVNGV…GMHVISIEGV (87 aa)). [2Fe-2S] cluster-binding residues include Cys45, Cys50, Cys53, Cys75, Cys115, Cys118, Cys151, and Cys153. The FAD-binding PCMH-type domain occupies 249–434 (GGNEGITWYR…LSVFLPWTRP (186 aa)). FAD-binding positions include 277–284 (LLVGNTEV), Phe357, 367–371 (CIGGN), Asp380, Leu424, and Lys442. Mo-molybdopterin-binding residues include Gln788 and Phe819. Substrate is bound by residues Glu823 and Arg901. Arg933 is a Mo-molybdopterin binding site. The substrate site is built by Phe935 and Thr1031. Ala1100 contacts Mo-molybdopterin. Glu1289 functions as the Proton acceptor in the catalytic mechanism.

This sequence belongs to the xanthine dehydrogenase family. As to quaternary structure, homodimer. It depends on [2Fe-2S] cluster as a cofactor. FAD is required as a cofactor. The cofactor is Mo-molybdopterin. In terms of tissue distribution, expressed in roots, leaves, stems, flowers and siliques.

It catalyses the reaction xanthine + NAD(+) + H2O = urate + NADH + H(+). The catalysed reaction is hypoxanthine + NAD(+) + H2O = xanthine + NADH + H(+). Key enzyme involved in purine catabolism. Catalyzes the oxidation of hypoxanthine to xanthine and the oxidation of xanthine to urate. Regulates the level of ureides and plays a role during plant growth and development and senescence. The chain is Xanthine dehydrogenase 2 (XDH2) from Arabidopsis thaliana (Mouse-ear cress).